Reading from the N-terminus, the 85-residue chain is MKVTLIAILTCAAVLVLHTTAAEELEAESQLMEVGMPDTELAAVDEERLFECSVSCEIGKEGNKDCKKKKCKGGWKCKFNMCVKV.

Residues 1–22 form the signal peptide; the sequence is MKVTLIAILTCAAVLVLHTTAA. The propeptide occupies 23-48; it reads EELEAESQLMEVGMPDTELAAVDEER. Cystine bridges form between Cys52/Cys66, Cys56/Cys77, and Cys71/Cys82.

This sequence belongs to the neurotoxin 12 (Hwtx-2) family. 02 (Hwtx-2) subfamily. In terms of tissue distribution, expressed by the venom gland.

It localises to the secreted. Functionally, postsynaptic neurotoxin. The sequence is that of U4-theraphotoxin-Hhn1j from Cyriopagopus hainanus (Chinese bird spider).